A 267-amino-acid polypeptide reads, in one-letter code: 2-keto-3-deoxy-L-rhamnonate aldolase (267 aa).

H49 acts as the Proton acceptor in catalysis. Residue Q151 participates in substrate binding. E153 contacts Mg(2+). Substrate contacts are provided by A178 and D179. Residue D179 participates in Mg(2+) binding.

It belongs to the HpcH/HpaI aldolase family. KDR aldolase subfamily. Homohexamer. Mg(2+) is required as a cofactor.

It catalyses the reaction 2-dehydro-3-deoxy-L-rhamnonate = (S)-lactaldehyde + pyruvate. Its function is as follows. Catalyzes the reversible retro-aldol cleavage of 2-keto-3-deoxy-L-rhamnonate (KDR) to pyruvate and lactaldehyde. This is 2-keto-3-deoxy-L-rhamnonate aldolase from Escherichia coli O6:K15:H31 (strain 536 / UPEC).